The sequence spans 292 residues: Inhibitory synaptic factor 1 (292 aa).

The disordered stretch occupies residues methionine 1–isoleucine 25. Positions lysine 30–aspartate 63 form a coiled coil. Residues threonine 120 to asparagine 292 form a disordered region. The span at glycine 180–leucine 192 shows a compositional bias: basic and acidic residues. Residues cysteine 198 to leucine 216 show a composition bias toward acidic residues. The segment covering arginine 263 to lysine 285 has biased composition (polar residues).

This sequence belongs to the INSYN1 family. In terms of assembly, interacts with GPHN.

It localises to the postsynaptic density. In terms of biological role, component of the protein machinery at the inhibitory synapses, probably acting as a scaffold. Inhibitory synapses dampen neuronal activity through postsynaptic hyperpolarization. This synaptic inhibition is fundamental for the functioning of the central nervous system, shaping and orchestrating the flow of information through neuronal networks to generate a precise neural code. This is Inhibitory synaptic factor 1 (Insyn1) from Mus musculus (Mouse).